The primary structure comprises 175 residues: Acireductone dioxygenase (175 aa).

Residues histidine 81, histidine 83, glutamate 87, and histidine 126 each contribute to the Fe(2+) site. Ni(2+) contacts are provided by histidine 81, histidine 83, glutamate 87, and histidine 126.

The protein belongs to the acireductone dioxygenase (ARD) family. Requires Fe(2+) as cofactor. The cofactor is Ni(2+).

It is found in the cytoplasm. It localises to the nucleus. It catalyses the reaction 1,2-dihydroxy-5-(methylsulfanyl)pent-1-en-3-one + O2 = 4-methylsulfanyl-2-oxobutanoate + formate + 2 H(+). It carries out the reaction 1,2-dihydroxy-5-(methylsulfanyl)pent-1-en-3-one + O2 = 3-(methylsulfanyl)propanoate + CO + formate + 2 H(+). Its pathway is amino-acid biosynthesis; L-methionine biosynthesis via salvage pathway; L-methionine from S-methyl-5-thio-alpha-D-ribose 1-phosphate: step 5/6. In terms of biological role, catalyzes 2 different reactions between oxygen and the acireductone 1,2-dihydroxy-3-keto-5-methylthiopentene (DHK-MTPene) depending upon the metal bound in the active site. Fe-containing acireductone dioxygenase (Fe-ARD) produces formate and 2-keto-4-methylthiobutyrate (KMTB), the alpha-ketoacid precursor of methionine in the methionine recycle pathway. Ni-containing acireductone dioxygenase (Ni-ARD) produces methylthiopropionate, carbon monoxide and formate, and does not lie on the methionine recycle pathway. The polypeptide is Acireductone dioxygenase (Phaeosphaeria nodorum (strain SN15 / ATCC MYA-4574 / FGSC 10173) (Glume blotch fungus)).